The following is a 407-amino-acid chain: Nicotinate phosphoribosyltransferase (407 aa).

A Phosphohistidine; by autocatalysis modification is found at His-228.

The protein belongs to the NAPRTase family. Transiently phosphorylated on a His residue during the reaction cycle. Phosphorylation strongly increases the affinity for substrates and increases the rate of nicotinate D-ribonucleotide production. Dephosphorylation regenerates the low-affinity form of the enzyme, leading to product release.

The catalysed reaction is nicotinate + 5-phospho-alpha-D-ribose 1-diphosphate + ATP + H2O = nicotinate beta-D-ribonucleotide + ADP + phosphate + diphosphate. Its pathway is cofactor biosynthesis; NAD(+) biosynthesis; nicotinate D-ribonucleotide from nicotinate: step 1/1. 100-fold more active in the presence of saturating ATP. Catalyzes the synthesis of beta-nicotinate D-ribonucleotide from nicotinate and 5-phospho-D-ribose 1-phosphate at the expense of ATP. Functions in the deamidating salvage pathway for production of NAD from nicotinamide. Displays a strict preference for nicotinate over nicotinamide substrate. The polypeptide is Nicotinate phosphoribosyltransferase (Acinetobacter baylyi (strain ATCC 33305 / BD413 / ADP1)).